The chain runs to 887 residues: Valine--tRNA ligase (887 aa).

The short motif at 47–57 (PNVTGALHMGH) is the 'HIGH' region element. A 'KMSKS' region motif is present at residues 527 to 531 (KMSKS). Lys530 serves as a coordination point for ATP. Positions 817–885 (LVNVEEEEKR…LLASLEKIRK (69 aa)) form a coiled coil.

This sequence belongs to the class-I aminoacyl-tRNA synthetase family. ValS type 1 subfamily. As to quaternary structure, monomer.

The protein localises to the cytoplasm. It catalyses the reaction tRNA(Val) + L-valine + ATP = L-valyl-tRNA(Val) + AMP + diphosphate. In terms of biological role, catalyzes the attachment of valine to tRNA(Val). As ValRS can inadvertently accommodate and process structurally similar amino acids such as threonine, to avoid such errors, it has a 'posttransfer' editing activity that hydrolyzes mischarged Thr-tRNA(Val) in a tRNA-dependent manner. The sequence is that of Valine--tRNA ligase from Geobacter sulfurreducens (strain ATCC 51573 / DSM 12127 / PCA).